We begin with the raw amino-acid sequence, 206 residues long: Glycerol-3-phosphate acyltransferase 1 (206 aa).

A run of 5 helical transmembrane segments spans residues 14–34, 67–87, 91–111, 124–144, and 148–168; these read IALAAAIIGYLFGSIPFGLIL, ATLLLDALKASAAAWVVSYFL, AAIIAGFFAFIGHLFPVWIGF, LLGVAPIMVVLFAAVWLAVAF, and YSSLSALVAMLVIPVALWILG.

The protein belongs to the PlsY family. As to quaternary structure, probably interacts with PlsX.

It localises to the cell inner membrane. The catalysed reaction is an acyl phosphate + sn-glycerol 3-phosphate = a 1-acyl-sn-glycero-3-phosphate + phosphate. It participates in lipid metabolism; phospholipid metabolism. In terms of biological role, catalyzes the transfer of an acyl group from acyl-phosphate (acyl-PO(4)) to glycerol-3-phosphate (G3P) to form lysophosphatidic acid (LPA). This enzyme utilizes acyl-phosphate as fatty acyl donor, but not acyl-CoA or acyl-ACP. The polypeptide is Glycerol-3-phosphate acyltransferase 1 (Rhizobium johnstonii (strain DSM 114642 / LMG 32736 / 3841) (Rhizobium leguminosarum bv. viciae)).